Consider the following 311-residue polypeptide: Homeobox-leucine zipper protein ATHB-6 (311 aa).

Residues 1–10 show a composition bias toward polar residues; the sequence is MMKRLSSSDS. A disordered region spans residues 1-32; it reads MMKRLSSSDSVGGLISLCPTTSTDEQSPRRYG. Residues 1–43 are interaction with ABI1; it reads MMKRLSSSDSVGGLISLCPTTSTDEQSPRRYGGREFQSMLEGY. A DNA-binding region (homeobox) is located at residues 59 to 118; it reads LSEKKRRLSINQVKALEKNFELENKLEPERKVKLAQELGLQPRQVAVWFQNRRARWKTKQ. Residues 119 to 154 are leucine-zipper; it reads LEKDYGVLKTQYDSLRHNFDSLRRDNESLLQEISKL. Residues 157-183 are disordered; the sequence is KLNGGGGEEEEEENNAAVTTESDISVK. The interaction with ABI1 stretch occupies residues 218–311; it reads LRDLLPLKAA…HWYSTVDHWN (94 aa).

Belongs to the HD-ZIP homeobox family. Class I subfamily. As to quaternary structure, interacts with ABI1. Post-translationally, phosphorylated by PKA. Reversible inactivation of the binding to DNA by phosphorylation. In terms of tissue distribution, widely expressed.

It is found in the nucleus. Functionally, transcription activator that may act as growth regulators in response to water deficit. Interacts with the core sequence 5'-CAATTATTA-3' of promoters in response to ABA and in an ABI1-dependent manner. Involved in the negative regulation of the ABA signaling pathway. This Arabidopsis thaliana (Mouse-ear cress) protein is Homeobox-leucine zipper protein ATHB-6 (ATHB-6).